Reading from the N-terminus, the 701-residue chain is Protein mono-ADP-ribosyltransferase PARP12 (701 aa).

3 consecutive C3H1-type zinc fingers follow at residues 94–119 (LCRFMVYGACKFLRAGKNCRNSHSLT), 150–179 (WLLPEICQHYNKGDGPHGSCAFQKQCIKLH), and 180–202 (ICQYFLQGECKFGTSCKRSHDFS). A disordered region spans residues 234 to 268 (KNKSSAPSRVPPLFVPQGTSERKDSSGSVSPNTLS). S258 is subject to Phosphoserine. The segment covering 259–268 (SGSVSPNTLS) has biased composition (polar residues). 2 consecutive C3H1-type zinc fingers follow at residues 270 to 297 (EEGDQICLYHIRKSCSFQDKCHRVHFHL) and 271 to 296 (EGDQICLYHIRKSCSFQDKCHRVHFH). 2 consecutive WWE domains span residues 298 to 361 (PYRW…RLST) and 364 to 458 (SVTK…KVCR). Residue C474 is modified to ADP-ribosylcysteine. A PARP catalytic domain is found at 484–698 (IPDYWDSSAL…ILLALGSLFS (215 aa)). Residues D600 and D611 each carry the ADP-ribosyl aspartic acid modification.

This sequence belongs to the ARTD/PARP family. As to quaternary structure, interacts with PARP11; this interaction plays a key role in zika virus suppression. Interacts with ISG15. Auto-mono-ADP-ribosylated. In terms of processing, phosphorylated by PRKD1.

It localises to the nucleus. Its subcellular location is the golgi apparatus. The protein localises to the trans-Golgi network. The protein resides in the cytoplasm. It is found in the stress granule. It carries out the reaction L-aspartyl-[protein] + NAD(+) = 4-O-(ADP-D-ribosyl)-L-aspartyl-[protein] + nicotinamide. It catalyses the reaction L-cysteinyl-[protein] + NAD(+) = S-(ADP-D-ribosyl)-L-cysteinyl-[protein] + nicotinamide + H(+). Functionally, mono-ADP-ribosyltransferase that mediates mono-ADP-ribosylation of target proteins. Acts as an antiviral factor by cooperating with PARP11 to suppress Zika virus replication. Displays anti-alphavirus activity during IFN-gamma immune activation by directly ADP-ribosylating the alphaviral non-structural proteins nsP3 and nsP4. Acts as a component of the PRKD1-driven regulatory cascade that selectively controls a major branch of the basolateral transport pathway by catalyzing the MARylation of GOLGA1. Acts also as a key regulator of mitochondrial function, protein translation, and inflammation. Inhibits PINK1/Parkin-dependent mitophagy and promotes cartilage degeneration by inhibiting the ubiquitination and SUMOylation of MFN1/2 by upregulating ISG15 and ISGylation. The protein is Protein mono-ADP-ribosyltransferase PARP12 of Homo sapiens (Human).